The primary structure comprises 106 residues: Large ribosomal subunit protein uL24 (106 aa).

The protein belongs to the universal ribosomal protein uL24 family. As to quaternary structure, part of the 50S ribosomal subunit.

Its function is as follows. One of two assembly initiator proteins, it binds directly to the 5'-end of the 23S rRNA, where it nucleates assembly of the 50S subunit. In terms of biological role, one of the proteins that surrounds the polypeptide exit tunnel on the outside of the subunit. In Thermosipho melanesiensis (strain DSM 12029 / CIP 104789 / BI429), this protein is Large ribosomal subunit protein uL24.